The following is a 354-amino-acid chain: Histidinol-phosphate aminotransferase 1 (354 aa).

K209 is modified (N6-(pyridoxal phosphate)lysine).

This sequence belongs to the class-II pyridoxal-phosphate-dependent aminotransferase family. Histidinol-phosphate aminotransferase subfamily. As to quaternary structure, homodimer. It depends on pyridoxal 5'-phosphate as a cofactor.

It catalyses the reaction L-histidinol phosphate + 2-oxoglutarate = 3-(imidazol-4-yl)-2-oxopropyl phosphate + L-glutamate. It participates in amino-acid biosynthesis; L-histidine biosynthesis; L-histidine from 5-phospho-alpha-D-ribose 1-diphosphate: step 7/9. This is Histidinol-phosphate aminotransferase 1 (hisC1) from Oceanobacillus iheyensis (strain DSM 14371 / CIP 107618 / JCM 11309 / KCTC 3954 / HTE831).